The primary structure comprises 223 residues: Global nitrogen regulator (223 aa).

The HTH crp-type domain occupies 143-216 (RDMGSRLVSF…KKKITVHKPV (74 aa)). The segment at residues 176–195 (HQAIAEAIGSTRVTVTRLLG) is a DNA-binding region (H-T-H motif).

Required for full expression of proteins subject to ammonium repression. Transcriptional activator of genes subject to nitrogen control. Functionally, has affinity for the xisA upstream region. Binds to a 66 bp region containing three repeats of the consensus recognition sequence 5'-ACATT-3'. The protein is Global nitrogen regulator (ntcA) of Nostoc sp. (strain PCC 7120 / SAG 25.82 / UTEX 2576).